Reading from the N-terminus, the 296-residue chain is GTPase Era (296 aa).

The 168-residue stretch at 3–170 (KSGFVTIVGR…KELMFKYIPE (168 aa)) folds into the Era-type G domain. The tract at residues 11–18 (GRPNVGKS) is G1. 11–18 (GRPNVGKS) contributes to the GTP binding site. The segment at 37 to 41 (QTTRN) is G2. The tract at residues 58 to 61 (DTPG) is G3. GTP contacts are provided by residues 58–62 (DTPGI) and 120–123 (NKID). Positions 120-123 (NKID) are G4. The G5 stretch occupies residues 149–151 (ISA). Residues 201 to 278 (LSEEVPHGIA…YIRLWVKVKE (78 aa)) enclose the KH type-2 domain.

It belongs to the TRAFAC class TrmE-Era-EngA-EngB-Septin-like GTPase superfamily. Era GTPase family. As to quaternary structure, monomer.

The protein localises to the cytoplasm. It localises to the cell membrane. An essential GTPase that binds both GDP and GTP, with rapid nucleotide exchange. Plays a role in 16S rRNA processing and 30S ribosomal subunit biogenesis and possibly also in cell cycle regulation and energy metabolism. In Clostridium botulinum (strain ATCC 19397 / Type A), this protein is GTPase Era.